The chain runs to 459 residues: Exodeoxyribonuclease 7 large subunit (459 aa).

Belongs to the XseA family. Heterooligomer composed of large and small subunits.

Its subcellular location is the cytoplasm. It carries out the reaction Exonucleolytic cleavage in either 5'- to 3'- or 3'- to 5'-direction to yield nucleoside 5'-phosphates.. Bidirectionally degrades single-stranded DNA into large acid-insoluble oligonucleotides, which are then degraded further into small acid-soluble oligonucleotides. The chain is Exodeoxyribonuclease 7 large subunit from Pseudomonas fluorescens (strain SBW25).